Here is a 628-residue protein sequence, read N- to C-terminus: MVSKLSQLQTELLAALLESGLSKEALIQALGEPGPYLMVGDGPLDKGESCGGTRGDLTELPNGLGETRGSEDDTDDDGEDFAPPILKELENLSPEEAAHQKAVVESLLQEDPWRVAKMVKSYLQQHNIPQREVVDTTGLNQSHLSQHLNKGTPMKTQKRAALYTWYVRKQREVAQQFTHAGQGGLIEEPTGDELPTKKGRRNRFKWGPASQQILFQAYERQKNPSKEERETLVEECNRAECIQRGVSPSQAQGLGSNLVTEVRVYNWFANRRKEEAFRHKLAMDTYNGPPPGPGPGPALPAHSSPGLPTTTLSPSKVHGVRYGQSATSEAAEVPSSSGGPLVTVSAALHQVSPTGLEPSSLLSTEAKLVSATGGPLPPVSTLTALHSLEQTSPGLNQQPQNLIMASLPGVMTIGPGEPASLGPTFTNTGASTLVIGLASTQAQSVPVINSMGSSLTTLQPVQFSQPLHPSYQQPLMPPVQSHVAQSPFMATMAQLQSPHALYSHKPEVAQYTHTSLLPQTMLITDTNLSTLASLTPTKQVFTSDTEASSEPGLHEPSSPATTIHIPSQDPSNIQHLQPAHRLSTSPTVSSSSLVLYQSSDSNGHSHLLPSNHGVIETFISTQMASSSQ.

Residues 1-31 (MVSKLSQLQTELLAALLESGLSKEALIQALG) form a dimerization region. An HNF-p1 domain is found at 1-32 (MVSKLSQLQTELLAALLESGLSKEALIQALGE). The segment at 47 to 79 (GESCGGTRGDLTELPNGLGETRGSEDDTDDDGE) is disordered. Ser-70 is modified (phosphoserine). Thr-74 carries the post-translational modification Phosphothreonine. A POU-specific atypical domain is found at 87–182 (KELENLSPEE…VAQQFTHAGQ (96 aa)). At Ser-93 the chain carries Phosphoserine. Lys-117 participates in a covalent cross-link: Glycyl lysine isopeptide (Lys-Gly) (interchain with G-Cter in ubiquitin). Interaction with DNA stretches follow at residues 130–132 (QRE), 143–149 (HLSQHLN), 155–158 (KTQK), and 203–206 (RFKW). The segment at 183-205 (GGLIEEPTGDELPTKKGRRNRFK) is disordered. The Nuclear localization signal signature appears at 197–205 (KKGRRNRFK). The homeobox; HNF1-type DNA-binding region spans 199-279 (GRRNRFKWGP…NRRKEEAFRH (81 aa)). At Ser-247 the chain carries Phosphoserine. Interaction with DNA regions lie at residues 263-265 (RVY) and 270-273 (NRRK). 2 disordered regions span residues 284–338 (DTYN…SSSG) and 541–585 (FTSD…LSTS). Positions 288–298 (GPPPGPGPGPA) are enriched in pro residues. A Phosphoserine modification is found at Ser-313. Polar residues-rich tracts occupy residues 324-338 (QSATSEAAEVPSSSG) and 558-575 (SPATTIHIPSQDPSNIQH).

Belongs to the HNF1 homeobox family. As to quaternary structure, binds DNA as a dimer. Heterotetramer with PCBD1; formed by a dimer of dimers. Interacts with PCBD1. Interacts with BHLHE41. Interacts with NR5A2. Interacts with SPOP; this interaction promotes ubiquitination and degradation of HNF1A. Post-translationally, ubiquitinated in s SPOP-dependent manner; leading to prteasomal degradation. In terms of tissue distribution, liver.

The protein localises to the nucleus. In terms of biological role, transcriptional activator that regulates the tissue specific expression of multiple genes, especially in pancreatic islet cells and in liver. Binds to the inverted palindrome 5'-GTTAATNATTAAC-3'. Activates the transcription of CYP1A2, CYP2E1 and CYP3A11. The protein is Hepatocyte nuclear factor 1-alpha (Hnf1a) of Rattus norvegicus (Rat).